The following is a 37-amino-acid chain: Large ribosomal subunit protein bL36 (37 aa).

The protein belongs to the bacterial ribosomal protein bL36 family.

The protein is Large ribosomal subunit protein bL36 of Caldanaerobacter subterraneus subsp. tengcongensis (strain DSM 15242 / JCM 11007 / NBRC 100824 / MB4) (Thermoanaerobacter tengcongensis).